The following is a 1249-amino-acid chain: MAGE-like protein 2 (1249 aa).

The segment covering 1-10 has biased composition (polar residues); the sequence is MSQLSKNLGD. Disordered stretches follow at residues 1–50, 134–233, 300–327, 349–378, 410–433, 515–569, 647–679, 714–746, 862–910, and 930–957; these read MSQL…PPID, APGA…AQPP, QPPA…QPMA, PQVP…WQAT, RQGP…VRQA, QALP…LPAP, QPFQ…EVPT, LMTP…RAPS, PQAT…DWQG, and VSGD…ILSG. Composition is skewed to pro residues over residues 40–49 and 140–233; these read PPVPWDPPPI and AHPP…AQPP. The segment covering 301–311 has biased composition (low complexity); it reads PPASGAPMAQP. Pro residues-rich tracts occupy residues 312-324 and 349-358; these read AAPP…PPAQ and PQVPQGPQAP. Over residues 369–378 the composition is skewed to polar residues; the sequence is QATSPGWQAT. Over residues 410 to 432 the composition is skewed to pro residues; the sequence is RQGPPPIRPGPPPIRPGPPPVRQ. The span at 525–552 shows a compositional bias: low complexity; the sequence is QAPQARLPAPQVQAAPQVPTAPPATQVP. The segment covering 553-567 has biased composition (pro residues); sequence AAPPAGPQVPQPVLP. A compositionally biased stretch (low complexity) spans 662 to 675; that stretch reads QLPPQQAQASGPQA. Residues 725-746 are compositionally biased toward basic and acidic residues; it reads SIDRRGSSKERRTSSKERRAPS. Residues 862 to 871 show a composition bias toward low complexity; that stretch reads PQATATTQEA. Positions 881–891 are enriched in basic residues; that stretch reads RSGKATRKKKH. An MAGE domain is found at 1020–1219; it reads LDERANALVQ…QSWPFHYLEA (200 aa). The span at 1226 to 1235 shows a compositional bias: acidic residues; that stretch reads EDTDEDEPDT. The segment at 1226-1249 is disordered; sequence EDTDEDEPDTGDSAHGPTSRPPPR.

Part of a complex consisting of MAGEL2, TRIM27 and USP7; directly interacts with USP7. Interacts with TRIM27. Interacts with VPS35; leading to recruitment at retromer-containing endosomes. Interacts with BMAL1 and PER2. Expressed in placenta, fetal and adult brain. Not detected in heart and small intestine, very low levels in fibroblasts. Not expressed in brain of a Prader-Willi patient.

It localises to the early endosome. The protein localises to the cytoplasm. It is found in the nucleus. Its function is as follows. Probably enhances ubiquitin ligase activity of RING-type zinc finger-containing E3 ubiquitin-protein ligases, possibly through recruitment and/or stabilization of the Ubl-conjugating enzyme (E2) at the E3:substrate complex. Acts as a regulator of retrograde transport via its interaction with VPS35. Recruited to retromer-containing endosomes and promotes the formation of 'Lys-63'-linked polyubiquitin chains at 'Lys-220' of WASHC1 together with TRIM27, leading to promote endosomal F-actin assembly. Regulates the circadian clock by repressing the transcriptional activator activity of the CLOCK-BMAL1 heterodimer. Significantly promotes the cytoplasmic accumulation of CLOCK. This Homo sapiens (Human) protein is MAGE-like protein 2 (MAGEL2).